The primary structure comprises 259 residues: Ribonuclease HII (259 aa).

The 189-residue stretch at T70–E258 folds into the RNase H type-2 domain. The a divalent metal cation site is built by D76, E77, and D168.

Belongs to the RNase HII family. Mn(2+) serves as cofactor. The cofactor is Mg(2+).

Its subcellular location is the cytoplasm. The enzyme catalyses Endonucleolytic cleavage to 5'-phosphomonoester.. Endonuclease that specifically degrades the RNA of RNA-DNA hybrids. In Streptococcus pneumoniae (strain ATCC 700669 / Spain 23F-1), this protein is Ribonuclease HII.